The sequence spans 71 residues: Large ribosomal subunit protein uL29 (71 aa).

The protein belongs to the universal ribosomal protein uL29 family.

The protein is Large ribosomal subunit protein uL29 of Rickettsia akari (strain Hartford).